We begin with the raw amino-acid sequence, 465 residues long: 3-isopropylmalate dehydratase large subunit (465 aa).

The [4Fe-4S] cluster site is built by Cys-347, Cys-407, and Cys-410. A disordered region spans residues 416–443; that stretch reads DTLRPGERSASTSNRNFEGRQGPGGRTH.

Belongs to the aconitase/IPM isomerase family. LeuC type 1 subfamily. As to quaternary structure, heterodimer of LeuC and LeuD. [4Fe-4S] cluster is required as a cofactor.

It catalyses the reaction (2R,3S)-3-isopropylmalate = (2S)-2-isopropylmalate. It functions in the pathway amino-acid biosynthesis; L-leucine biosynthesis; L-leucine from 3-methyl-2-oxobutanoate: step 2/4. Its function is as follows. Catalyzes the isomerization between 2-isopropylmalate and 3-isopropylmalate, via the formation of 2-isopropylmaleate. The chain is 3-isopropylmalate dehydratase large subunit from Frankia casuarinae (strain DSM 45818 / CECT 9043 / HFP020203 / CcI3).